A 953-amino-acid polypeptide reads, in one-letter code: Valine--tRNA ligase (953 aa).

Residues 42 to 52 carry the 'HIGH' region motif; it reads PNVTGSLHMGH. Residues 554–558 carry the 'KMSKS' region motif; the sequence is KMSKS. Lys-557 is an ATP binding site. Residues 884–952 are a coiled coil; sequence LIDKDAELDR…LEQQKATIAA (69 aa).

The protein belongs to the class-I aminoacyl-tRNA synthetase family. ValS type 1 subfamily. Monomer.

The protein localises to the cytoplasm. The enzyme catalyses tRNA(Val) + L-valine + ATP = L-valyl-tRNA(Val) + AMP + diphosphate. Catalyzes the attachment of valine to tRNA(Val). As ValRS can inadvertently accommodate and process structurally similar amino acids such as threonine, to avoid such errors, it has a 'posttransfer' editing activity that hydrolyzes mischarged Thr-tRNA(Val) in a tRNA-dependent manner. This is Valine--tRNA ligase from Vibrio cholerae serotype O1 (strain ATCC 39315 / El Tor Inaba N16961).